The following is a 154-amino-acid chain: Protein X (154 aa).

Residues 26 to 45 (RGRPVSGPLGSLSSSSPSAV) are disordered. Over residues 31–43 (SGPLGSLSSSSPS) the composition is skewed to low complexity. Residues 68–117 (PCALRFTSARRMETTVNAHQILPKILHKRTLGLSTMSTTDLEAYFKDCLF) are mitochondrial targeting sequence.

It belongs to the orthohepadnavirus protein X family. May form homodimer. May interact with host CEBPA, CFLAR, CREB1, DDB1, E4F1, HBXIP, HSPD1/HSP60, NFKBIA, POLR2E and SMAD4. Interacts with host SMC5-SMC6 complex and induces its degradation. Interacts with host TRPC4AP; leading to prevent ubiquitination of TRPC4AP. Interacts with host PLSCR1; this interaction promotes ubiquitination and degradation of HBx and impairs HBx-mediated cell proliferation. Post-translationally, a fraction may be phosphorylated in insect cells and HepG2 cells, a human hepatoblastoma cell line. Phosphorylated in vitro by host protein kinase C or mitogen-activated protein kinase. N-acetylated in insect cells.

The protein resides in the host cytoplasm. Its subcellular location is the host nucleus. It localises to the host mitochondrion. Its function is as follows. Multifunctional protein that plays a role in silencing host antiviral defenses and promoting viral transcription. Does not seem to be essential for HBV infection. May be directly involved in development of cirrhosis and liver cancer (hepatocellular carcinoma). Most of cytosolic activities involve modulation of cytosolic calcium. The effect on apoptosis is controversial depending on the cell types in which the studies have been conducted. May induce apoptosis by localizing in mitochondria and causing loss of mitochondrial membrane potential. May also modulate apoptosis by binding host CFLAR, a key regulator of the death-inducing signaling complex (DISC). Promotes viral transcription by using the host E3 ubiquitin ligase DDB1 to target the SMC5-SMC6 complex to proteasomal degradation. This host complex would otherwise bind to viral episomal DNA, and prevents its transcription. Moderately stimulates transcription of many different viral and cellular transcription elements. Promoters and enhancers stimulated by HBx contain DNA binding sites for NF-kappa-B, AP-1, AP-2, c-EBP, ATF/CREB, or the calcium-activated factor NF-AT. This chain is Protein X, found in Hepatitis B virus genotype D subtype ayw (isolate Japan/JYW796/1988) (HBV-D).